The primary structure comprises 37 residues: Large ribosomal subunit protein bL36A (37 aa).

Belongs to the bacterial ribosomal protein bL36 family.

The protein is Large ribosomal subunit protein bL36A of Arthrobacter sp. (strain FB24).